A 379-amino-acid polypeptide reads, in one-letter code: Chaperone protein DnaJ (379 aa).

The region spanning 5–70 (DYYEVLGVQK…QKRAAYDRFG (66 aa)) is the J domain. Residues 137–215 (GATTTVRVPT…CGGQGRVRKE (79 aa)) form a CR-type zinc finger. Zn(2+)-binding residues include Cys-150, Cys-153, Cys-167, Cys-170, Cys-189, Cys-192, Cys-203, and Cys-206. CXXCXGXG motif repeat units follow at residues 150–157 (CESCNGTG), 167–174 (CPTCNGHG), 189–196 (CPACHGVG), and 203–210 (CRTCGGQG).

It belongs to the DnaJ family. In terms of assembly, homodimer. Zn(2+) serves as cofactor.

It localises to the cytoplasm. Its function is as follows. Participates actively in the response to hyperosmotic and heat shock by preventing the aggregation of stress-denatured proteins and by disaggregating proteins, also in an autonomous, DnaK-independent fashion. Unfolded proteins bind initially to DnaJ; upon interaction with the DnaJ-bound protein, DnaK hydrolyzes its bound ATP, resulting in the formation of a stable complex. GrpE releases ADP from DnaK; ATP binding to DnaK triggers the release of the substrate protein, thus completing the reaction cycle. Several rounds of ATP-dependent interactions between DnaJ, DnaK and GrpE are required for fully efficient folding. Also involved, together with DnaK and GrpE, in the DNA replication of plasmids through activation of initiation proteins. This Rhodospirillum centenum (strain ATCC 51521 / SW) protein is Chaperone protein DnaJ.